Reading from the N-terminus, the 460-residue chain is Telomere-binding protein homolog (460 aa).

The protein belongs to the telombin family.

It localises to the nucleus. It is found in the chromosome. The protein localises to the telomere. May bind telomeric T4G4 sequences. In Euplotes crassus, this protein is Telomere-binding protein homolog.